The sequence spans 130 residues: Small ribosomal subunit protein uS8 (130 aa).

The protein belongs to the universal ribosomal protein uS8 family. In terms of assembly, part of the 30S ribosomal subunit. Contacts proteins S5 and S12.

One of the primary rRNA binding proteins, it binds directly to 16S rRNA central domain where it helps coordinate assembly of the platform of the 30S subunit. The chain is Small ribosomal subunit protein uS8 from Erwinia tasmaniensis (strain DSM 17950 / CFBP 7177 / CIP 109463 / NCPPB 4357 / Et1/99).